The chain runs to 267 residues: tRNA-cytidine(32) 2-sulfurtransferase 2 (267 aa).

A PP-loop motif motif is present at residues 42–47 (SGGKDS). Cysteine 117, cysteine 120, and cysteine 208 together coordinate [4Fe-4S] cluster.

This sequence belongs to the TtcA family. As to quaternary structure, homodimer. Mg(2+) serves as cofactor. [4Fe-4S] cluster is required as a cofactor.

Its subcellular location is the cytoplasm. The catalysed reaction is cytidine(32) in tRNA + S-sulfanyl-L-cysteinyl-[cysteine desulfurase] + AH2 + ATP = 2-thiocytidine(32) in tRNA + L-cysteinyl-[cysteine desulfurase] + A + AMP + diphosphate + H(+). It participates in tRNA modification. Functionally, catalyzes the ATP-dependent 2-thiolation of cytidine in position 32 of tRNA, to form 2-thiocytidine (s(2)C32). The sulfur atoms are provided by the cysteine/cysteine desulfurase (IscS) system. The sequence is that of tRNA-cytidine(32) 2-sulfurtransferase 2 from Francisella tularensis subsp. holarctica (strain FTNF002-00 / FTA).